Here is a 103-residue protein sequence, read N- to C-terminus: Non-histone chromosomal protein 6 (103 aa).

2 disordered regions span residues 1–30 (MPKA…KRGL) and 70–103 (KQRA…EESS). The segment at residues 26 to 94 (PKRGLSAYMF…RYEDEKQAYN (69 aa)) is a DNA-binding region (HMG box). Over residues 70–91 (KQRAPYEAKAAADKKRYEDEKQ) the composition is skewed to basic and acidic residues.

The protein belongs to the NHP6 family. Weakly associates with the stable heterodimer of ctc-1/pob3 and ctc-2/spt16 to form the FACT complex.

The protein localises to the nucleus. Its subcellular location is the chromosome. DNA-binding protein that induces severe bending of DNA. Required for DNA-binding by the FACT complex, a general chromatin factor that acts to reorganize nucleosomes. The FACT complex is involved in multiple processes that require DNA as a template such as mRNA elongation, DNA replication and DNA repair. Also augments the fidelity of transcription by RNA polymerase III independently of any role in the FACT complex. In Neurospora crassa (strain ATCC 24698 / 74-OR23-1A / CBS 708.71 / DSM 1257 / FGSC 987), this protein is Non-histone chromosomal protein 6 (nhp-1).